A 460-amino-acid polypeptide reads, in one-letter code: Sorting nexin-4 (460 aa).

A compositionally biased stretch (polar residues) spans 1–16 (MTATEQQQDDFSNVSW). The interval 1–53 (MTATEQQQDDFSNVSWSEHVHDQQTRSVPDAEEPGHDMNAPGTGLERDAPSLG) is disordered. The PX domain occupies 56-178 (KLECTVDTPI…TFLESPDWNA (123 aa)). Coiled coils occupy residues 238-266 (EKVI…QKLI), 306-337 (RDMQ…EYLN), and 374-403 (QARR…TSDM).

Belongs to the sorting nexin family. In terms of assembly, forms a complex with ATG20 and ATG17.

The protein localises to the cytoplasm. It localises to the membrane. It is found in the endosome membrane. Functionally, sorting nexin involved in the separation or division of vacuoles throughout the entire life cycle of the cells. Involved in retrieval of late-Golgi SNAREs from post-Golgi endosomes to the trans-Golgi network, for cytoplasm to vacuole transport (Cvt), and autophagy of large cargos including mitophagy, pexophagy and glycophagy. Autophagy is required for proper vegetative growth, asexual/sexual reproduction, and full virulence. Autophagy is particularly involved in the biosynthesis of deoxynivalenol (DON), an important virulence determinant. The polypeptide is Sorting nexin-4 (Gibberella zeae (strain ATCC MYA-4620 / CBS 123657 / FGSC 9075 / NRRL 31084 / PH-1) (Wheat head blight fungus)).